Here is a 292-residue protein sequence, read N- to C-terminus: F-box only protein 16 (292 aa).

In terms of domain architecture, F-box spans 86 to 132; sequence LDFTTKLPRVLSLYIFSFLDPRSLCRCAQVCWHWKNLAELDQLWMLK. Disordered regions lie at residues 188–224 and 238–292; these read SPEE…SSDK and RDPM…PLCP. Low complexity predominate over residues 194–204; sequence SPLSAFRSSSS. A compositionally biased stretch (basic and acidic residues) spans 260 to 273; that stretch reads RQSHDKKNKLQDRT.

Part of a SCF (SKP1-cullin-F-box) protein ligase complex. Expressed in heart, spleen and colon.

Probably recognizes and binds to some phosphorylated proteins and promotes their ubiquitination and degradation. In Homo sapiens (Human), this protein is F-box only protein 16 (FBXO16).